The primary structure comprises 755 residues: Protein phosphatase 1E (755 aa).

A disordered region spans residues 21-131 (EFRGPCGGGE…PPLPPLPRPL (111 aa)). 7 repeat units span residues 31-32 (PE), 33-34 (PE), 35-36 (PE), 37-38 (PE), 39-40 (PE), 41-42 (PE), and 43-44 (PE). Residues 31–52 (PEPEPEPEPEPEPESEPEPEPE) are 11 X 2 AA tandem repeats of P-E. 2 stretches are compositionally biased toward acidic residues: residues 31–68 (PEPEPEPEPEPEPESEPEPEPELVEAEAAEASVEEPGE) and 77–101 (EEGDQEQDPEPEEEAAVEGEEEEEG). The 8; approximate repeat unit spans residues 45–46 (SE). Repeat copies occupy residues 47–48 (PE), 49–50 (PE), and 51–52 (PE). The span at 102-113 (AATAAAAPGHSA) shows a compositional bias: low complexity. Pro residues predominate over residues 114–129 (VPPPPPQLPPLPPLPR). Positions 231–488 (ETSIHAIKNM…DNITVIVVFL (258 aa)) constitute a PPM-type phosphatase domain. Mn(2+)-binding residues include Asp273, Gly274, Asp435, and Asp479. The tract at residues 498–537 (SEESDWTENSFQGGQEDGGDDKENHGECKRPWPQHQCSAP) is disordered. Basic and acidic residues predominate over residues 518-527 (DKENHGECKR). A phosphoserine mark is found at Ser535 and Ser548.

The protein belongs to the PP2C family. As to quaternary structure, heterotrimer. Interacts with PAX1 and ARHGEF6 (or ARHGEF7). It depends on Mg(2+) as a cofactor. Mn(2+) is required as a cofactor.

It is found in the nucleus. Its subcellular location is the cytoplasm. The catalysed reaction is O-phospho-L-seryl-[protein] + H2O = L-seryl-[protein] + phosphate. It carries out the reaction O-phospho-L-threonyl-[protein] + H2O = L-threonyl-[protein] + phosphate. Protein phosphatase that inactivates multifunctional CaM kinases such as CAMK4 and CAMK2. Dephosphorylates and inactivates PAK. May play a role in the inhibition of actin fiber stress breakdown and in morphological changes driven by TNK2/CDC42. Dephosphorylates PRKAA2. The polypeptide is Protein phosphatase 1E (PPM1E) (Homo sapiens (Human)).